Consider the following 1333-residue polypeptide: Aldehyde oxidase 1 (1333 aa).

In terms of domain architecture, 2Fe-2S ferredoxin-type spans 4–91 (PQLLFYVNGQ…GTAVTTVEGI (88 aa)). [2Fe-2S] cluster contacts are provided by Cys43, Cys48, Cys51, and Cys73. Gln112 contacts Mo-molybdopterin. The [2Fe-2S] cluster site is built by Cys113, Cys116, Cys148, and Cys150. Cys150 provides a ligand contact to Mo-molybdopterin. Residues 235–420 (FYSNRMTWIS…VSVNIPCSRK (186 aa)) enclose the FAD-binding PCMH-type domain. Residues 263–270 (IVMGYTSV), Ala344, Ser353, His357, Asp366, and Leu410 contribute to the FAD site. Residues 801–802 (AF) and Met1042 each bind Mo-molybdopterin. Ser1063 bears the Phosphoserine mark. Residues 1083-1086 (GSVV), Gln1198, and Leu1263 each bind Mo-molybdopterin. Glu1265 functions as the Proton acceptor; for azaheterocycle hydroxylase activity in the catalytic mechanism.

The protein belongs to the xanthine dehydrogenase family. In terms of assembly, homodimer. [2Fe-2S] cluster is required as a cofactor. It depends on FAD as a cofactor. Mo-molybdopterin serves as cofactor. Post-translationally, the N-terminus is blocked. As to expression, expression in liver (at protein level). Also detected in heart, lung, spleen and kidney.

It localises to the cytoplasm. It catalyses the reaction an aldehyde + O2 + H2O = a carboxylate + H2O2 + H(+). The catalysed reaction is retinal + O2 + H2O = retinoate + H2O2 + H(+). With respect to regulation, inhibited by menadione and isovanillin. Not inhibited by allopurinol, a xanthine dehydrogenase potent inhibitor. Inhibited by the flavonoids quercetin, myricetin and genistein. Nitric oxide generation is inhibited by raloxifene and competitively inhibited by an increase in oxygen levels. Oxidase with broad substrate specificity, oxidizing aromatic azaheterocycles, such as N1-methylnicotinamide, N-methylphthalazinium and phthalazine, as well as aldehydes, such as benzaldehyde, retinal, pyridoxal, and vanillin. Plays a role in the metabolism of xenobiotics and drugs containing aromatic azaheterocyclic substituents. Participates in the bioactivation of prodrugs such as famciclovir, catalyzing the oxidation step from 6-deoxypenciclovir to penciclovir, which is a potent antiviral agent. Is probably involved in the regulation of reactive oxygen species homeostasis. Is a prominent source of superoxide generation via the one-electron reduction of molecular oxygen. Also catalyzes nitric oxide (NO) production; under anaerobic conditions, reduces nitrite to NO with NADH or aldehyde as electron donor, but under aerobic conditions, NADH is the preferred substrate. These reactions may be catalyzed by several isozymes. May play a role in adipogenesis. In Rattus norvegicus (Rat), this protein is Aldehyde oxidase 1.